We begin with the raw amino-acid sequence, 374 residues long: NADH-quinone oxidoreductase subunit D 1 (374 aa).

The protein belongs to the complex I 49 kDa subunit family. As to quaternary structure, NDH-1 is composed of 14 different subunits. Subunits NuoB, C, D, E, F, and G constitute the peripheral sector of the complex.

It localises to the cell membrane. It catalyses the reaction a quinone + NADH + 5 H(+)(in) = a quinol + NAD(+) + 4 H(+)(out). Functionally, NDH-1 shuttles electrons from NADH, via FMN and iron-sulfur (Fe-S) centers, to quinones in the respiratory chain. The immediate electron acceptor for the enzyme in this species is believed to be ubiquinone. Couples the redox reaction to proton translocation (for every two electrons transferred, four hydrogen ions are translocated across the cytoplasmic membrane), and thus conserves the redox energy in a proton gradient. The sequence is that of NADH-quinone oxidoreductase subunit D 1 from Roseiflexus sp. (strain RS-1).